We begin with the raw amino-acid sequence, 132 residues long: Fatty acid-binding protein, adipocyte (132 aa).

Residues 22–32 (KELGVGFATRK) carry the Nuclear localization signal motif. 2 residues coordinate (9Z,12Z)-octadecadienoate: Arg-107 and Arg-127.

This sequence belongs to the calycin superfamily. Fatty-acid binding protein (FABP) family. As to quaternary structure, monomer.

The protein resides in the cytoplasm. It is found in the nucleus. Functionally, lipid transport protein in adipocytes. Binds both long chain fatty acids and retinoic acid. Delivers long-chain fatty acids and retinoic acid to their cognate receptors in the nucleus. Has the highest binding affinity for linoleic acid and decreasing relative affinity for eicosapentaenoic acid (EPA), alpha-linolenic acid (ALA), docosahexaenoic acid (DHA), oleic acid, palmitic acid and stearic acid, respectively. In Pygoscelis papua (Gentoo penguin), this protein is Fatty acid-binding protein, adipocyte.